A 336-amino-acid polypeptide reads, in one-letter code: Transcription initiation factor IIB (336 aa).

The TFIIB-type zinc finger occupies 41–72 (QKLRCPICGNTVFIEDAERGQIVCASCGYVLM). The Zn(2+) site is built by cysteine 45, cysteine 48, cysteine 64, and cysteine 67. 2 tandem repeats follow at residues 152 to 235 (HELN…AREL) and 246 to 327 (QYVP…ELAK).

Belongs to the TFIIB family.

Functionally, stabilizes TBP binding to an archaeal box-A promoter. Also responsible for recruiting RNA polymerase II to the pre-initiation complex (DNA-TBP-TFIIB). The chain is Transcription initiation factor IIB from Caldivirga maquilingensis (strain ATCC 700844 / DSM 13496 / JCM 10307 / IC-167).